We begin with the raw amino-acid sequence, 465 residues long: Ran-binding protein 3-like (465 aa).

The RanBD1 domain maps to 276–417 (SQPSRKCLLE…ALQSFNKQRD (142 aa)).

Interacts with SMAD1, SMAD5 and SMAD8; the interaction (with SMAD at least) increases when SMAD1 is not phosphorylated and mediates SMAD1 nuclear export.

The protein localises to the nucleus. The protein resides in the cytoplasm. Nuclear export factor for BMP-specific SMAD1/5/8 that plays a critical role in terminating BMP signaling and regulating mesenchymal stem cell differentiation by blocking osteoblast differentiation to promote myogenic differention. Directly recognizes dephosphorylated SMAD1/5/8 and mediates their nuclear export in a Ran-dependent manner. The sequence is that of Ran-binding protein 3-like (RANBP3L) from Homo sapiens (Human).